The following is a 633-amino-acid chain: Putative ankyrin repeat protein L774 (633 aa).

ANK repeat units lie at residues 91 to 120, 123 to 152, 221 to 250, 252 to 275, 338 to 367, 369 to 393, and 517 to 546; these read IYGHLYCLYIKNNRLDLCDYLIQSNYEYDP, NCDDILEFVPDENEADVLMYIINNNNFFKI, NVNKLLEIACIFSITEIVTHLLDIGTEYDF, TILKSHISLHILKIFLNRGNILDS, DYDVVMKKAIMNSSLDIIDYCISNGTDVNN, MTYAFQHYNQSCFTHLLNQGGTLST, and DNLKILFVAIMKYDIDMLKFLFEINDNSND.

The protein is Putative ankyrin repeat protein L774 of Acanthamoeba polyphaga mimivirus (APMV).